The chain runs to 318 residues: uncharacterized protein (318 aa).

This sequence belongs to the NAD(P)-dependent epimerase/dehydratase family.

This is an uncharacterized protein from Staphylococcus haemolyticus (strain JCSC1435).